The chain runs to 706 residues: Drebrin (706 aa).

Position 2 is an N-acetylalanine (A2). In terms of domain architecture, ADF-H spans 3-134; sequence GVSFSGHRLE…DAGAIGQRLS (132 aa). S141 and S142 each carry phosphoserine. The segment covering 209–236 has biased composition (basic and acidic residues); that stretch reads ERMEQERQEQEERERRYREREQQIEEHR. The segment at 209–497 is disordered; sequence ERMEQERQEQ…AEPAASVTSV (289 aa). Position 241 is a phosphoserine (S241). A compositionally biased stretch (basic and acidic residues) spans 288–298; sequence DNPREFFRQQE. Positions 331-345 are enriched in low complexity; the sequence is SDSGPSSSSSSSSSP. S344 bears the Phosphoserine mark. Polar residues predominate over residues 357-366; the sequence is RTPNLSSSLP. Phosphothreonine is present on residues T379 and T383. Polar residues predominate over residues 382-396; the sequence is PTRSPSDSSTASTPI. S385, S387, and S393 each carry phosphoserine. The residue at position 394 (T394) is a Phosphothreonine. Pro residues predominate over residues 411-422; sequence QPPPPPPPPPPT. The segment covering 453–497 has biased composition (low complexity); the sequence is AAEPPQAQEPPLLQSSPLEDSMCTESPEQAALAAPAEPAASVTSV. Phosphoserine is present on S468. The residue at position 550 (T550) is a Phosphothreonine. Positions 633–677 are disordered; that stretch reads EPHLLTNGETTQKEGTQASEGYFSQSQEEEFAQSEEPCAKVPPPV. Positions 639 to 651 are enriched in polar residues; it reads NGETTQKEGTQAS. A Phosphoserine modification is found at S658.

In terms of assembly, interacts with RUFY3. Interacts with CXCR4; this interaction is enhanced by antigenic stimulation. Interacts (via ADF-H domain) with ZMYND8 (via N-terminus); the interaction leads to sequestering of ZMYND8 in the cytoplasm. Expressed in the hippocampus, with expression in the pyramidal cells of CA1, CA2 and CA3 and in the granule cells of the dentate gyrus (at protein level). Highly expressed in brain, also present in stomach and to a lesser degree in kidney, colon, and urinary bladder. The E2 isoform is specifically expressed in adult stomach, kidney, and cultured cells.

It is found in the cytoplasm. Its subcellular location is the cell projection. The protein resides in the dendrite. The protein localises to the cell cortex. It localises to the cell junction. It is found in the growth cone. Its function is as follows. Actin cytoskeleton-organizing protein that plays a role in the formation of cell projections. Required for actin polymerization at immunological synapses (IS) and for the recruitment of the chemokine receptor CXCR4 to IS. Plays a role in dendritic spine morphogenesis and organization, including the localization of the dopamine receptor DRD1 to the dendritic spines. Involved in memory-related synaptic plasticity in the hippocampus. The protein is Drebrin (Dbn1) of Mus musculus (Mouse).